The chain runs to 264 residues: Taurine import ATP-binding protein TauB (264 aa).

One can recognise an ABC transporter domain in the interval 4–233 (LQLERISAQY…RYAAGESARA (230 aa)). 38–45 (GPSGSGKT) lines the ATP pocket.

This sequence belongs to the ABC transporter superfamily. Taurine importer (TC 3.A.1.17.1) family. The complex is composed of two ATP-binding proteins (TauB), two transmembrane proteins (TauC) and a solute-binding protein (TauA).

The protein resides in the cell inner membrane. It carries out the reaction taurine(out) + ATP + H2O = taurine(in) + ADP + phosphate + H(+). Its function is as follows. Part of the ABC transporter complex TauABC involved in taurine import. Responsible for energy coupling to the transport system. This is Taurine import ATP-binding protein TauB from Pseudomonas fluorescens (strain Pf0-1).